Consider the following 345-residue polypeptide: DNA-directed RNA polymerase subunit alpha (345 aa).

Residues 1 to 233 are alpha N-terminal domain (alpha-NTD); sequence MVRNWCSLIR…KQLQVFVGLH (233 aa). The interval 256–345 is alpha C-terminal domain (alpha-CTD); sequence LNDILLRHVE…EEMGEIQEEG (90 aa).

The protein belongs to the RNA polymerase alpha chain family. As to quaternary structure, homodimer. The RNAP catalytic core consists of 2 alpha, 1 beta, 1 beta' and 1 omega subunit. When a sigma factor is associated with the core the holoenzyme is formed, which can initiate transcription.

It carries out the reaction RNA(n) + a ribonucleoside 5'-triphosphate = RNA(n+1) + diphosphate. In terms of biological role, DNA-dependent RNA polymerase catalyzes the transcription of DNA into RNA using the four ribonucleoside triphosphates as substrates. In Syntrophus aciditrophicus (strain SB), this protein is DNA-directed RNA polymerase subunit alpha.